We begin with the raw amino-acid sequence, 463 residues long: Probable glycosyltransferase 3 (463 aa).

Residues 1 to 24 (MAVTGGGRPAVRQQAARGKQMQRT) are Cytoplasmic-facing. A helical; Signal-anchor for type II membrane protein membrane pass occupies residues 25–47 (FNNVKITLICGFITLLVLRGTVG). Residues 48-463 (INLLTYGVGG…ALKMDAKIES (416 aa)) are Lumenal-facing. The tract at residues 82–125 (EIRSDTDDDDDDEEEEPLGVDASTTTTTNSTTTTATAARRRSSN) is disordered. The segment covering 87 to 99 (TDDDDDDEEEEPL) has biased composition (acidic residues). Low complexity predominate over residues 103-118 (ASTTTTTNSTTTTATA). N-linked (GlcNAc...) asparagine glycosylation is found at asparagine 110, asparagine 125, and asparagine 442.

The protein belongs to the glycosyltransferase 34 family.

The protein localises to the golgi apparatus membrane. Probable glycosyltransferase that may be involved in the biosynthesis of xyloglucan. The polypeptide is Probable glycosyltransferase 3 (Oryza sativa subsp. japonica (Rice)).